The following is a 275-amino-acid chain: Shikimate dehydrogenase (NADP(+)) (275 aa).

Shikimate contacts are provided by residues 19–21 and threonine 66; that span reads SIS. Lysine 70 serves as the catalytic Proton acceptor. Shikimate is bound by residues asparagine 91 and aspartate 106. NADP(+) contacts are provided by residues 129–133, 153–158, and isoleucine 219; these read GAGGA and NRTYGR. Tyrosine 221 is a binding site for shikimate. Glycine 242 is a binding site for NADP(+).

Belongs to the shikimate dehydrogenase family. As to quaternary structure, homodimer.

It catalyses the reaction shikimate + NADP(+) = 3-dehydroshikimate + NADPH + H(+). The protein operates within metabolic intermediate biosynthesis; chorismate biosynthesis; chorismate from D-erythrose 4-phosphate and phosphoenolpyruvate: step 4/7. Involved in the biosynthesis of the chorismate, which leads to the biosynthesis of aromatic amino acids. Catalyzes the reversible NADPH linked reduction of 3-dehydroshikimate (DHSA) to yield shikimate (SA). The polypeptide is Shikimate dehydrogenase (NADP(+)) (Dictyoglomus thermophilum (strain ATCC 35947 / DSM 3960 / H-6-12)).